The following is a 453-amino-acid chain: Mitochondrial import inner membrane translocase subunit TIM44 (453 aa).

Residue Thr-129 is modified to Phosphothreonine. An ATP-binding site is contributed by 167–174 (GGEKLGKT). Lys-178 is modified (N6-succinyllysine). At Ser-181 the chain carries Phosphoserine. Lys-218 is subject to N6-succinyllysine.

Belongs to the Tim44 family. As to quaternary structure, probable component of the PAM complex at least composed of a mitochondrial HSP70 protein, GRPEL1 or GRPEL2, TIMM44, TIMM16/PAM16 and TIMM14/DNAJC19. The complex interacts with the TIMM23 component of the TIM23 complex. Interacts with SLC25A4/ANT1 and SLC25A5/ANT2; leading to inhibit the presequence translocase TIMM23, thereby promoting stabilization of PINK1.

The protein localises to the mitochondrion inner membrane. Its subcellular location is the mitochondrion matrix. Its function is as follows. Essential component of the PAM complex, a complex required for the translocation of transit peptide-containing proteins from the inner membrane into the mitochondrial matrix in an ATP-dependent manner. Recruits mitochondrial HSP70 to drive protein translocation into the matrix using ATP as an energy source. The polypeptide is Mitochondrial import inner membrane translocase subunit TIM44 (Timm44) (Rattus norvegicus (Rat)).